We begin with the raw amino-acid sequence, 117 residues long: Large ribosomal subunit protein bL20 (117 aa).

It belongs to the bacterial ribosomal protein bL20 family.

Its function is as follows. Binds directly to 23S ribosomal RNA and is necessary for the in vitro assembly process of the 50S ribosomal subunit. It is not involved in the protein synthesizing functions of that subunit. The sequence is that of Large ribosomal subunit protein bL20 from Oleidesulfovibrio alaskensis (strain ATCC BAA-1058 / DSM 17464 / G20) (Desulfovibrio alaskensis).